The chain runs to 491 residues: Neuronal acetylcholine receptor subunit beta-2 (491 aa).

The first 18 residues, 1–18, serve as a signal peptide directing secretion; sequence MALLRVLCLLAALRRSLC. Topologically, residues 19 to 226 are extracellular; it reads TDTEERLVEY…ITYDFIIRRK (208 aa). N-linked (GlcNAc...) asparagine glycans are attached at residues Asn44 and Asn161. Cys148 and Cys162 are oxidised to a cystine. A helical membrane pass occupies residues 227–251; the sequence is PLFYTINLIIPCILITSLAILVFYL. At 252 to 258 the chain is on the cytoplasmic side; the sequence is PSDCGEK. Residues 259–277 traverse the membrane as a helical segment; sequence MTLCISVLLALTVFLLLIS. Over 278 to 292 the chain is Extracellular; sequence KIVPPTSLDVPLVGK. Residues 293–314 traverse the membrane as a helical segment; the sequence is YLMFTMVLVTFSIVTSVCVLNV. Topologically, residues 315-449 are cytoplasmic; it reads HHRSPTTHTM…WKYVAMVIDR (135 aa). Residues 450 to 468 form a helical membrane-spanning segment; it reads LFLWIFVFVCVFGTVGMFL.

This sequence belongs to the ligand-gated ion channel (TC 1.A.9) family. Acetylcholine receptor (TC 1.A.9.1) subfamily. Beta-2/CHRNB2 sub-subfamily. As to quaternary structure, neuronal AChR is a heteropentamer composed of two different types of subunits: alpha and beta. CHRNB2/Beta-2 subunit can be combined to CHRNA2/alpha-2, CHRNA3/alpha-3 or CHRNA4/alpha-4, CHRNA5/alpha-5, CHRNA6/alpha-6 and CHRNB3/beta-3 to give rise to functional receptors.

Its subcellular location is the synaptic cell membrane. The protein resides in the cell membrane. It carries out the reaction Ca(2+)(in) = Ca(2+)(out). The catalysed reaction is K(+)(in) = K(+)(out). It catalyses the reaction Na(+)(in) = Na(+)(out). With respect to regulation, activated by a myriad of ligands such as acetylcholine, cytisine, nicotine, choline and epibatidine. nAChR activity is inhibited by the antagonist alpha-conotoxins BuIA, PnIA, PnIC, GID and MII, small disulfide-constrained peptides from cone snails. Functionally, component of neuronal acetylcholine receptors (nAChRs) that function as pentameric, ligand-gated cation channels with high calcium permeability among other activities. nAChRs are excitatory neurotrasnmitter receptors formed by a collection of nAChR subunits known to mediate synaptic transmission in the nervous system and the neuromuscular junction. Each nAchR subunit confers differential attributes to channel properties, including activation, deactivation and desensitization kinetics, pH sensitivity, cation permeability, and binding to allosteric modulators. CHRNB2 forms heteropentameric neuronal acetylcholine receptors with CHRNA2, CHRNA3, CHRNA4 and CHRNA6, as well as CHRNA5 and CHRNB3 as accesory subunits. The polypeptide is Neuronal acetylcholine receptor subunit beta-2 (CHRNB2) (Gallus gallus (Chicken)).